A 661-amino-acid chain; its full sequence is Glycogen debranching enzyme (661 aa).

The active-site Nucleophile is the Asp-338. Residue Glu-373 is the Proton donor of the active site. The interval Asn-460 to Val-481 is disordered.

This sequence belongs to the glycosyl hydrolase 13 family.

It carries out the reaction Hydrolysis of (1-&gt;6)-alpha-D-glucosidic linkages to branches with degrees of polymerization of three or four glucose residues in limit dextrin.. The protein operates within glycan degradation; glycogen degradation. Functionally, removes maltotriose and maltotetraose chains that are attached by 1,6-alpha-linkage to the limit dextrin main chain, generating a debranched limit dextrin. The protein is Glycogen debranching enzyme of Serratia proteamaculans (strain 568).